Reading from the N-terminus, the 223-residue chain is Ribose-5-phosphate isomerase A (223 aa).

Residues 32-35 (TGST), 83-86 (DGAD), and 96-99 (KGGG) contribute to the substrate site. Glutamate 105 (proton acceptor) is an active-site residue. Residue lysine 123 participates in substrate binding.

It belongs to the ribose 5-phosphate isomerase family. As to quaternary structure, homodimer.

The catalysed reaction is aldehydo-D-ribose 5-phosphate = D-ribulose 5-phosphate. It functions in the pathway carbohydrate degradation; pentose phosphate pathway; D-ribose 5-phosphate from D-ribulose 5-phosphate (non-oxidative stage): step 1/1. Catalyzes the reversible conversion of ribose-5-phosphate to ribulose 5-phosphate. In Acinetobacter baumannii (strain ATCC 17978 / DSM 105126 / CIP 53.77 / LMG 1025 / NCDC KC755 / 5377), this protein is Ribose-5-phosphate isomerase A.